The following is a 414-amino-acid chain: tRNA N6-adenosine threonylcarbamoyltransferase, mitochondrial (414 aa).

A mitochondrion-targeting transit peptide spans 1 to 29 (MLMLRRTAGAIPKPPKSKVYGFLRRFSVH). N6-acetyllysine is present on residues lysine 74 and lysine 140. Residues histidine 147 and histidine 151 each contribute to the a divalent metal cation site. Substrate is bound by residues 169 to 173 (LISGG) and aspartate 202. The residue at position 203 (lysine 203) is an N6-acetyllysine. The substrate site is built by glycine 222 and glutamate 226. Residues lysine 230 and lysine 299 each carry the N6-acetyllysine modification. Residues 329 to 330 (SN) and threonine 357 contribute to the substrate site. Aspartate 358 serves as a coordination point for a divalent metal cation.

Belongs to the KAE1 / TsaD family. Monomer. The cofactor is a divalent metal cation.

The protein resides in the mitochondrion. The enzyme catalyses L-threonylcarbamoyladenylate + adenosine(37) in tRNA = N(6)-L-threonylcarbamoyladenosine(37) in tRNA + AMP + H(+). In terms of biological role, required for the formation of a threonylcarbamoyl group on adenosine at position 37 (t(6)A37) in mitochondrial tRNAs that read codons beginning with adenine. Probably involved in the transfer of the threonylcarbamoyl moiety of threonylcarbamoyl-AMP (TC-AMP) to the N6 group of A37. Involved in mitochondrial genome maintenance. This Mus musculus (Mouse) protein is tRNA N6-adenosine threonylcarbamoyltransferase, mitochondrial.